We begin with the raw amino-acid sequence, 548 residues long: Synaptic vesicle 2-related protein (548 aa).

The Cytoplasmic segment spans residues 1-87 (MEEDLFQLRQ…GFGKFQWKLS (87 aa)). A phosphoserine mark is found at S25 and S31. Residues 88–108 (VLTGLAWMADAMEMMILSILA) traverse the membrane as a helical segment. Topologically, residues 109–122 (PQLHCEWRLPSWQV) are vesicular. Residues 123 to 143 (ALLTSVVFVGMMSSSTLWGNI) form a helical membrane-spanning segment. At 144–156 (SDQYGRKTGLKIS) the chain is on the cytoplasmic side. The helical transmembrane segment at 157-177 (VLWTLYYGILSAFAPVYSWIL) threads the bilayer. Topologically, residues 178–180 (VLR) are vesicular. The helical transmembrane segment at 181–201 (GLVGFGIGGVPQSVTLYAEFL) threads the bilayer. Residues 202–209 (PMKARAKC) are Cytoplasmic-facing. Residues 210–230 (ILLIEVFWAIGTVFEVVLAVF) traverse the membrane as a helical segment. Residues 231 to 238 (VMPSLGWR) lie on the Vesicular side of the membrane. A helical membrane pass occupies residues 239–259 (WLLILSAVPLLLFAVLCFWLP). At 260–316 (ESARYDVLSGNQEKAIATLKRIATENGAPMPLGKLIISRQEDRGKMRDLFTPHFRWT) the chain is on the cytoplasmic side. Residues 317–337 (TLLLWFIWFSNAFSYYGLVLL) traverse the membrane as a helical segment. Residues 338-373 (TTELFQAGDVCGISSRKKAVEAKCSLACEYLSEEDY) lie on the Vesicular side of the membrane. The helical transmembrane segment at 374–394 (MDLLWTTLSEFPGVLVTLWII) threads the bilayer. Over 395–401 (DRLGRKK) the chain is Cytoplasmic. A helical membrane pass occupies residues 402–422 (TMALCFVIFSFCSLLLFICVG). Over 423 to 424 (RN) the chain is Vesicular. A helical membrane pass occupies residues 425 to 445 (VLTLLLFIARAFISGGFQAAY). Over 446–457 (VYTPEVYPTATR) the chain is Cytoplasmic. The helical transmembrane segment at 458–478 (ALGLGTCSGMARVGALITPFI) threads the bilayer. At 479 to 489 (AQVMLESSVYL) the chain is on the vesicular side. A helical membrane pass occupies residues 490 to 510 (TLAVYSGCCLLAALASCFLPI). Topologically, residues 511–548 (ETKGRGLQESSHREWGQEMVGRGMHGADVTRSNSGSQE) are cytoplasmic. S542 is subject to Phosphoserine.

This sequence belongs to the major facilitator superfamily.

Its subcellular location is the cytoplasmic vesicle. It localises to the secretory vesicle. The protein localises to the synaptic vesicle membrane. In Pongo abelii (Sumatran orangutan), this protein is Synaptic vesicle 2-related protein (SVOP).